The primary structure comprises 270 residues: tRNA pseudouridine synthase A (270 aa).

Asp-51 (nucleophile) is an active-site residue. Tyr-109 provides a ligand contact to substrate.

This sequence belongs to the tRNA pseudouridine synthase TruA family. As to quaternary structure, homodimer.

The catalysed reaction is uridine(38/39/40) in tRNA = pseudouridine(38/39/40) in tRNA. In terms of biological role, formation of pseudouridine at positions 38, 39 and 40 in the anticodon stem and loop of transfer RNAs. The chain is tRNA pseudouridine synthase A from Burkholderia thailandensis (strain ATCC 700388 / DSM 13276 / CCUG 48851 / CIP 106301 / E264).